A 904-amino-acid chain; its full sequence is Dynamin-like protein C (904 aa).

Positions isoleucine 44–leucine 102 form a coiled coil. The segment at histidine 53–serine 93 is disordered. Over residues arginine 67 to aspartate 90 the composition is skewed to basic and acidic residues. The Dynamin-type G domain occupies serine 119–proline 441. The segment at glycine 129–serine 136 is G1 motif. Position 129 to 136 (glycine 129 to serine 136) interacts with GTP. The tract at residues glycine 155–arginine 157 is G2 motif. Positions serine 169 to lysine 227 are disordered. A compositionally biased stretch (low complexity) spans serine 183–serine 213. The segment at aspartate 278–glycine 281 is G3 motif. GTP is bound by residues aspartate 278–phenylalanine 282 and threonine 343–aspartate 346. Residues threonine 343–aspartate 346 form a G4 motif region. Residues leucine 378–lysine 381 form a G5 motif region. Residues glutamate 781–phenylalanine 811 are a coiled coil. 2 disordered regions span residues serine 821–serine 840 and asparagine 853–asparagine 904. Residues asparagine 853–serine 876 are compositionally biased toward polar residues. Over residues asparagine 877–glutamine 891 the composition is skewed to low complexity.

The protein belongs to the TRAFAC class dynamin-like GTPase superfamily. Dynamin/Fzo/YdjA family.

The protein resides in the cytoplasm. The enzyme catalyses GTP + H2O = GDP + phosphate + H(+). Involved in cytokinesis. May hydrolyze GTP. This is Dynamin-like protein C (dlpC) from Dictyostelium discoideum (Social amoeba).